Consider the following 230-residue polypeptide: Orotidine 5'-phosphate decarboxylase (230 aa).

Substrate contacts are provided by residues aspartate 10, lysine 31, 58-67, threonine 117, arginine 179, glutamine 188, glycine 208, and arginine 209; that span reads DLKLHDIPNT. Lysine 60 acts as the Proton donor in catalysis.

This sequence belongs to the OMP decarboxylase family. Type 1 subfamily. Homodimer.

It carries out the reaction orotidine 5'-phosphate + H(+) = UMP + CO2. It participates in pyrimidine metabolism; UMP biosynthesis via de novo pathway; UMP from orotate: step 2/2. Functionally, catalyzes the decarboxylation of orotidine 5'-monophosphate (OMP) to uridine 5'-monophosphate (UMP). This is Orotidine 5'-phosphate decarboxylase from Staphylococcus aureus (strain bovine RF122 / ET3-1).